A 300-amino-acid polypeptide reads, in one-letter code: Glutamyl-Q tRNA(Asp) synthetase (300 aa).

Residues 14–18 (RFAPT) and glutamate 50 each bind L-glutamate. The 'HIGH' region motif lies at 17–27 (PTPSGFLHFGS). Zn(2+)-binding residues include cysteine 106, cysteine 108, tyrosine 120, and cysteine 124. 2 residues coordinate L-glutamate: tyrosine 177 and arginine 195. Residues 233–237 (KLGKS) carry the 'KMSKS' region motif. Lysine 236 provides a ligand contact to ATP.

The protein belongs to the class-I aminoacyl-tRNA synthetase family. GluQ subfamily. Zn(2+) serves as cofactor.

Functionally, catalyzes the tRNA-independent activation of glutamate in presence of ATP and the subsequent transfer of glutamate onto a tRNA(Asp). Glutamate is transferred on the 2-amino-5-(4,5-dihydroxy-2-cyclopenten-1-yl) moiety of the queuosine in the wobble position of the QUC anticodon. The chain is Glutamyl-Q tRNA(Asp) synthetase from Pseudomonas putida (strain ATCC 700007 / DSM 6899 / JCM 31910 / BCRC 17059 / LMG 24140 / F1).